The chain runs to 176 residues: Ribosome maturation factor RimM (176 aa).

The PRC barrel domain occupies 104 to 176; that stretch reads EDEYYFYEIL…KIIAKEMEWI (73 aa).

The protein belongs to the RimM family. In terms of assembly, binds ribosomal protein uS19.

It is found in the cytoplasm. Functionally, an accessory protein needed during the final step in the assembly of 30S ribosomal subunit, possibly for assembly of the head region. Essential for efficient processing of 16S rRNA. May be needed both before and after RbfA during the maturation of 16S rRNA. It has affinity for free ribosomal 30S subunits but not for 70S ribosomes. The protein is Ribosome maturation factor RimM of Thermotoga maritima (strain ATCC 43589 / DSM 3109 / JCM 10099 / NBRC 100826 / MSB8).